We begin with the raw amino-acid sequence, 464 residues long: METTTTPLLPGDRSRCGWLRRRLRLKNPLSSELSGAVGDLGTFIPIVLTLTLVSNLDLSTTLIFTGFYNIATGLLFDIPMPVQPMKSIAAVAVSESPHLTPSQIAAAGASTAATLLLLGATGAMSFLYNIIPLPVVRGVQLSQGLQFAFTAIKYVRFNYDTATLKPSSSPRIWLGLDGLILALAALLFIILSTGSGNDREAEDGDLAETSSNESQSRRRRLRLLSSIPSALIVFALGLVLCFIRDPSIFKDLKFGPSKFHILRISWDDWKIGFLRAAIPQIPLSVLNSVIAVCKLSNDLFDKELSATTVSISVGVMNLIGCWFGAMPVCHGAGGLAGQYRFGARSGLSVIFLGIGKLIVGLVFGNSFVRILSQFPIGILGVLLLFAGIELAMASKDMNSKEDSFIMLVCAAVSMTGSSAALGFGCGVVLYLLLKLRTLDCSSVTLFSRSSDESQVDSEAAPRDV.

The Tonoplast targeting signal motif lies at 8 to 9 (LL). Helical transmembrane passes span 33-53 (LSGA…LTLV), 62-82 (LIFT…PMPV), 116-136 (LLLG…LPVV), 172-192 (IWLG…IILS), 223-243 (LLSS…LCFI), 309-329 (VSIS…MPVC), 348-368 (SVIF…NSFV), 374-394 (FPIG…AMAS), and 404-424 (FIML…LGFG).

The protein belongs to the SLC26A/SulP transporter (TC 2.A.53) family. As to expression, expressed in leaves. Not detected in roots, shoots and seeds.

Its subcellular location is the vacuole membrane. Its function is as follows. Molybdate transporter required for vacuolar molybdate export during senescence. In Arabidopsis thaliana (Mouse-ear cress), this protein is Molybdate transporter 2 (MOT2).